The primary structure comprises 886 residues: MAEVNVEKLAGDIGTTVDKLLQQFSQAGITKQAGESVTEAEKATLLDHLSKQHGGTGSDGPARMTLQRKSKSTLSVTGSTGKAKSVQVEVRKTRTYVKKSAMEQEQEELRLAAEEKLRLEEQQKAAQEAAELKAKQEAERKAKEDADRKAKEEAKRKADAERKAKQKQMTPEQSAKSEKDRIEAERLQKEAEEAALKKAEEEAKRQAEEARKLAEENSARWKKEEEERKKREETSDHHLTTSTYAREAEDVADARDEQGTRRAKKKKKAPAKDKFAASKGRNKGKLKAPTSLQHGFTKPTADVKNEVRISETITVAELASRMAVKGAEVVKTMMKMGDMVTINQVIDQEAAQLVAEEMGHKVIIVKENELEQKVLNDRHEDGKSEPRAPVVTVMGHVDHGKTSTLDYIRSAKVASGEAGGITQHIGAYHVDVNGNMITFLDTPGHAAFTSMRARGAQATDIVILVVAADDGVMPQTKEAVQHARAAGVPLIIAVNKMDKEGVDPDRVKNELAQLDVIPEEWGGDTQYVHISAKTGLGIDELLEAVLNQSELLELTAPTVGMAAGVVIESRLDKGRGPVASILVQSGTLNQGDIVLCGLEYGRIRAMRDENGKDIKSAGPSIPVEILGLSGIPAAGDEATVVKDERKAREVALYRQGKFRDVKLARQQKAKLENMFSHMTEGDVSEVNVVLKADVQGSIEAISDSLTKLSTDEVKVKIVGSGVGGITETDATLAAASNAIVVGFNVRADASARKVIESENLDLRYYSVIYSLIDEVKQAMSGMLAPEFKQEIIGLAQVRDVFKSPKIGAIAGCMVTEGVIKRSAPIRVLRDNVVIYEGELESLRRFKDDVADVRNGMECGIGVKNYNDVRVGDQIEVFETVEIQRTL.

2 disordered regions span residues 46 to 91 (LDHL…VEVR) and 121 to 297 (EQQK…HGFT). Positions 72–82 (STLSVTGSTGK) are enriched in polar residues. Composition is skewed to basic and acidic residues over residues 130–163 (AELKAKQEAERKAKEDADRKAKEEAKRKADAERK), 175–239 (AKSE…DHHL), and 246–260 (REAEDVADARDEQGT). Residues 386-555 (PRAPVVTVMG…LNQSELLELT (170 aa)) enclose the tr-type G domain. The interval 395–402 (GHVDHGKT) is G1. 395–402 (GHVDHGKT) is a GTP binding site. Residues 420-424 (GITQH) form a G2 region. A G3 region spans residues 441-444 (DTPG). GTP-binding positions include 441–445 (DTPGH) and 495–498 (NKMD). The segment at 495 to 498 (NKMD) is G4. Positions 531–533 (SAK) are G5.

Belongs to the TRAFAC class translation factor GTPase superfamily. Classic translation factor GTPase family. IF-2 subfamily.

It localises to the cytoplasm. One of the essential components for the initiation of protein synthesis. Protects formylmethionyl-tRNA from spontaneous hydrolysis and promotes its binding to the 30S ribosomal subunits. Also involved in the hydrolysis of GTP during the formation of the 70S ribosomal complex. The polypeptide is Translation initiation factor IF-2 (Pseudoalteromonas translucida (strain TAC 125)).